Consider the following 268-residue polypeptide: Non-homologous end joining protein Ku (268 aa).

One can recognise a Ku domain in the interval V13 to N175. The interval R174–S194 is disordered.

This sequence belongs to the prokaryotic Ku family. As to quaternary structure, homodimer. Interacts with LigD.

Its function is as follows. With LigD forms a non-homologous end joining (NHEJ) DNA repair enzyme, which repairs dsDNA breaks with reduced fidelity. Binds linear dsDNA with 5'- and 3'- overhangs but not closed circular dsDNA nor ssDNA. Recruits and stimulates the ligase activity of LigD. The sequence is that of Non-homologous end joining protein Ku from Gluconacetobacter diazotrophicus (strain ATCC 49037 / DSM 5601 / CCUG 37298 / CIP 103539 / LMG 7603 / PAl5).